Reading from the N-terminus, the 409-residue chain is Serine/threonine transporter SstT (409 aa).

Transmembrane regions (helical) follow at residues 14-34 (GNLI…GFIA), 57-77 (GALK…SIII), 89-109 (IIIL…VVSF), 149-169 (AISS…GIAL), 190-210 (IVKF…ATSV), 224-244 (LLLV…AAIV), 296-316 (ISIP…IAVL), 338-358 (IIAA…LMLI), and 365-385 (FGIS…IGVV).

The protein belongs to the dicarboxylate/amino acid:cation symporter (DAACS) (TC 2.A.23) family.

It localises to the cell inner membrane. It catalyses the reaction L-serine(in) + Na(+)(in) = L-serine(out) + Na(+)(out). The enzyme catalyses L-threonine(in) + Na(+)(in) = L-threonine(out) + Na(+)(out). Functionally, involved in the import of serine and threonine into the cell, with the concomitant import of sodium (symport system). The chain is Serine/threonine transporter SstT from Campylobacter fetus subsp. fetus (strain 82-40).